Here is a 113-residue protein sequence, read N- to C-terminus: Small ribosomal subunit protein uS17 (113 aa).

It belongs to the universal ribosomal protein uS17 family. In terms of assembly, part of the 30S ribosomal subunit.

One of the primary rRNA binding proteins, it binds specifically to the 5'-end of 16S ribosomal RNA. The protein is Small ribosomal subunit protein uS17 of Pyrococcus abyssi (strain GE5 / Orsay).